A 283-amino-acid polypeptide reads, in one-letter code: Shikimate dehydrogenase (NADP(+)) (283 aa).

Shikimate-binding positions include 16-18 (SLS) and T63. Residue K67 is the Proton acceptor of the active site. Residue D79 participates in NADP(+) binding. Residues N88 and D103 each contribute to the shikimate site. Residues 128 to 132 (GAGGA), A223, and G243 each bind NADP(+).

It belongs to the shikimate dehydrogenase family. Homodimer.

The enzyme catalyses shikimate + NADP(+) = 3-dehydroshikimate + NADPH + H(+). It participates in metabolic intermediate biosynthesis; chorismate biosynthesis; chorismate from D-erythrose 4-phosphate and phosphoenolpyruvate: step 4/7. Functionally, involved in the biosynthesis of the chorismate, which leads to the biosynthesis of aromatic amino acids. Catalyzes the reversible NADPH linked reduction of 3-dehydroshikimate (DHSA) to yield shikimate (SA). The chain is Shikimate dehydrogenase (NADP(+)) from Xanthomonas campestris pv. campestris (strain B100).